A 147-amino-acid polypeptide reads, in one-letter code: uncharacterized protein (147 aa).

Residues I50–I138 enclose the ABM domain.

This sequence belongs to the LsrG family.

This is an uncharacterized protein from Synechocystis sp. (strain ATCC 27184 / PCC 6803 / Kazusa).